A 63-amino-acid chain; its full sequence is MKAQDLRTKSVEELNAELVNLLGEQFKLRMQTATGQLQQTHQAKQVRRDIARVKTVLTEKAGE.

The protein belongs to the universal ribosomal protein uL29 family.

This is Large ribosomal subunit protein uL29 from Haemophilus influenzae (strain 86-028NP).